The following is a 423-amino-acid chain: Large ribosomal subunit protein mL37 (423 aa).

A mitochondrion-targeting transit peptide spans M1–G29.

It belongs to the mitochondrion-specific ribosomal protein mL37 family. In terms of assembly, component of the mitochondrial ribosome large subunit (39S) which comprises a 16S rRNA and about 50 distinct proteins.

It localises to the mitochondrion. This Mus musculus (Mouse) protein is Large ribosomal subunit protein mL37 (Mrpl37).